The sequence spans 431 residues: L-lysine N6-monooxygenase MbtG (431 aa).

Residues Met1–Ala21 form the signal peptide.

Belongs to the lysine N(6)-hydroxylase/L-ornithine N(5)-oxygenase family. It depends on FAD as a cofactor.

The enzyme catalyses L-lysine + NADPH + O2 = N(6)-hydroxy-L-lysine + NADP(+) + H2O. The protein operates within siderophore biosynthesis; mycobactin biosynthesis. Flavoprotein monooxygenase required for N-hydroxylation of the two acylated lysine residues during mycobactin assembly, thus producing the hydroxamate groups necessary for iron sequestration. Is also able, but less efficiently, to hydroxylate L-lysine (non acylated) in vitro. This chain is L-lysine N6-monooxygenase MbtG (mbtG), found in Mycobacterium bovis (strain ATCC BAA-935 / AF2122/97).